The following is an 881-amino-acid chain: Serine/threonine-protein phosphatase BSL1 (881 aa).

3 Kelch repeats span residues Gly-60–Thr-109, Arg-269–Pro-320, and Arg-338–Ser-385. Disordered regions lie at residues Ser-368–Asp-407 and Ala-436–Gly-464. Polar residues-rich tracts occupy residues Asp-374–Arg-383 and Thr-445–Thr-460. A Phosphoserine modification is found at Ser-491. The interval Val-503–Ser-522 is disordered. Residues Asp-584, His-586, Asp-618, and Asn-650 each coordinate Mn(2+). Catalysis depends on His-651, which acts as the Proton donor. Positions 703 and 782 each coordinate Mn(2+). The disordered stretch occupies residues Ile-837–Ile-881. Residue Ser-839 is modified to Phosphoserine.

Belongs to the PPP phosphatase family. BSU subfamily. In terms of assembly, interacts with CDG1 and CDL1. Mn(2+) is required as a cofactor. In terms of tissue distribution, expressed in mature cauline leaves and at the tip of influorescence, including flowers. Expressed at lower level in young tissues relative to older ones.

It is found in the nucleus. The catalysed reaction is O-phospho-L-seryl-[protein] + H2O = L-seryl-[protein] + phosphate. The enzyme catalyses O-phospho-L-threonyl-[protein] + H2O = L-threonyl-[protein] + phosphate. Functionally, phosphatase involved in elongation process, probably by acting as a regulator of brassinolide signaling. This is Serine/threonine-protein phosphatase BSL1 (BSL1) from Arabidopsis thaliana (Mouse-ear cress).